Consider the following 255-residue polypeptide: Tritrans,polycis-undecaprenyl-diphosphate synthase (geranylgeranyl-diphosphate specific) (255 aa).

Aspartate 34 is an active-site residue. Aspartate 34 provides a ligand contact to Mg(2+). Residues 35–38, histidine 51, and 79–81 each bind substrate; these read GNRR and STE. Asparagine 82 functions as the Proton acceptor in the catalytic mechanism. Residues phenylalanine 83, arginine 85, arginine 204, and 210–212 each bind substrate; that span reads RIS. Residue glutamate 223 participates in Mg(2+) binding.

It belongs to the UPP synthase family. As to quaternary structure, homodimer. Requires Mg(2+) as cofactor.

The catalysed reaction is geranylgeranyl diphosphate + 7 isopentenyl diphosphate = tri-trans,hepta-cis-undecaprenyl diphosphate + 7 diphosphate. In terms of biological role, catalyzes the sequential condensation of isopentenyl diphosphate (IPP) with geranylgeranyl diphosphate (GGPP) to yield (2Z,6Z,10Z,14Z,18Z,22Z,26Z,30E,34E,38E)-undecaprenyl diphosphate (tritrans,heptacis-UPP). It is probably the precursor of glycosyl carrier lipids. The protein is Tritrans,polycis-undecaprenyl-diphosphate synthase (geranylgeranyl-diphosphate specific) of Picrophilus torridus (strain ATCC 700027 / DSM 9790 / JCM 10055 / NBRC 100828 / KAW 2/3).